The following is a 380-amino-acid chain: MIISSASDYRAAAKRKLPRFLFDYIDGGAYAEHTLRANGSDLADISLRQRVLKNVDNVSLETRLFGESLAMPIILSPVGLSGMYARRGEVQVARAAANKRIPFCLSTVSVCSIEEVASQSDQAIWFQLYVLKDRGFMKNALERAKAAGVTTLVFTVDMPTPGARYRDAHSGMSGPYAAPRRILQAMTKPDWALNVGLLGRPHDLGNISRYLGKATTLEDYVGWLANNFDPSISWKDLEWIREFWQGPMIIKGILDPQDARDALSFGADGIVVSNHGGRQLDGVLSTAKALPPIVQAVGSDLTVLADSGIRSGLDVVRMLALGAKGVLLGRSMAYALGADGQRGVENMLDIFAREMHVAMTLTGVTSIEQIDASILVKAVA.

The region spanning 1–380 is the FMN hydroxy acid dehydrogenase domain; that stretch reads MIISSASDYR…DASILVKAVA (380 aa). Tyr24 provides a ligand contact to substrate. FMN is bound by residues Ser106 and Gln127. Tyr129 contributes to the substrate binding site. Thr155 contributes to the FMN binding site. Position 164 (Arg164) interacts with substrate. Lys251 is an FMN binding site. The active-site Proton acceptor is the His275. Arg278 is a substrate binding site. Residue 306–330 participates in FMN binding; that stretch reads DSGIRSGLDVVRMLALGAKGVLLGR.

Belongs to the FMN-dependent alpha-hydroxy acid dehydrogenase family. Homotetramer. FMN serves as cofactor.

Its subcellular location is the cell inner membrane. The enzyme catalyses (S)-lactate + A = pyruvate + AH2. Catalyzes the conversion of L-lactate to pyruvate. Is coupled to the respiratory chain. This Pseudomonas syringae pv. syringae (strain B728a) protein is L-lactate dehydrogenase.